Reading from the N-terminus, the 1414-residue chain is DNA-directed RNA polymerase subunit beta' (1414 aa).

Positions 70, 72, 85, and 88 each coordinate Zn(2+). Residues Asp-460, Asp-462, and Asp-464 each coordinate Mg(2+). Zn(2+) contacts are provided by Cys-819, Cys-893, Cys-900, and Cys-903. Residues 1391–1414 (AEEAFDFGTPSAPAEEPQQHPAAE) form a disordered region. Positions 1400–1414 (PSAPAEEPQQHPAAE) are enriched in low complexity.

This sequence belongs to the RNA polymerase beta' chain family. The RNAP catalytic core consists of 2 alpha, 1 beta, 1 beta' and 1 omega subunit. When a sigma factor is associated with the core the holoenzyme is formed, which can initiate transcription. Mg(2+) is required as a cofactor. The cofactor is Zn(2+).

The enzyme catalyses RNA(n) + a ribonucleoside 5'-triphosphate = RNA(n+1) + diphosphate. In terms of biological role, DNA-dependent RNA polymerase catalyzes the transcription of DNA into RNA using the four ribonucleoside triphosphates as substrates. This is DNA-directed RNA polymerase subunit beta' from Burkholderia lata (strain ATCC 17760 / DSM 23089 / LMG 22485 / NCIMB 9086 / R18194 / 383).